Consider the following 212-residue polypeptide: MSSIDKTQRITQSDALPGRSTPMPVARLHVVHEHSMTHVPDHMSVAIFAMGCFWGVERLFWQQPGIYSTAAGYIGGYTPNPTYREVCSGQTDHAEAVRVVFDPAVISYDQLLQLFWENHDPAQGMRQGGDIGSQYRSAIYTLTPEQEQAAQESLQRFQQAMREKGDVRAISTEIVPAGPFYYAEDDHQQYLYKNPNGYCGLGGIGVCLPPPR.

Positions 1-14 are enriched in polar residues; sequence MSSIDKTQRITQSD. The disordered stretch occupies residues 1-21; that stretch reads MSSIDKTQRITQSDALPGRST. C52 is an active-site residue.

The protein belongs to the MsrA Met sulfoxide reductase family.

It catalyses the reaction L-methionyl-[protein] + [thioredoxin]-disulfide + H2O = L-methionyl-(S)-S-oxide-[protein] + [thioredoxin]-dithiol. The catalysed reaction is [thioredoxin]-disulfide + L-methionine + H2O = L-methionine (S)-S-oxide + [thioredoxin]-dithiol. Functionally, has an important function as a repair enzyme for proteins that have been inactivated by oxidation. Catalyzes the reversible oxidation-reduction of methionine sulfoxide in proteins to methionine. This Pectobacterium carotovorum subsp. carotovorum (strain PC1) protein is Peptide methionine sulfoxide reductase MsrA.